A 266-amino-acid chain; its full sequence is HLA class II histocompatibility antigen, DRB1 beta chain (266 aa).

The signal sequence occupies residues 1-29; it reads MVCLKLPGGSCMTALTVTLMVLSSPLALS. Residues 30 to 124 form a beta-1 region; sequence GDTRPRFLWQ…VESFTVQRRV (95 aa). The Extracellular portion of the chain corresponds to 30–227; that stretch reads GDTRPRFLWQ…RARSESAQSK (198 aa). Cys-44 and Cys-108 form a disulfide bridge. An N-linked (GlcNAc...) asparagine glycan is attached at Asn-48. Asp-86, Trp-90, His-110, Asn-111, and Arg-122 together coordinate a peptide antigen. The interval 125–227 is beta-2; sequence QPKVTVYPSK…RARSESAQSK (103 aa). In terms of domain architecture, Ig-like C1-type spans 126–214; that stretch reads PKVTVYPSKT…EHPSVTSPLT (89 aa). Cys-146 and Cys-202 form a disulfide bridge. The chain crosses the membrane as a helical span at residues 228 to 248; that stretch reads MLSGVGGFVLGLLFLGAGLFI. Over 249–266 the chain is Cytoplasmic; that stretch reads YFRNQKGHSGLQPTGFLS. Residue Lys-254 forms a Glycyl lysine isopeptide (Lys-Gly) (interchain with G-Cter in ubiquitin) linkage.

As to quaternary structure, heterotrimer that consists of an alpha chain HLA-DRA, a beta chain HLA-DRB1 and a peptide (peptide-MHCII). Newly synthesized alpha and beta chains forms a heterodimer (MHCII) that associates with the CD74/invariant chain (Ii) in the endoplasmic reticulum (ER). Ii is a trimer composed of three subunits and each subunit interacts with one MHCII dimer, blocking the peptide-binding cleft. As a result, MHCII molecules cannot bind peptides present in the ER. The complex of MHCII and CD74/Ii is transported in vesicles from ER to Golgi to lysosomes, where it encounters antigenic peptides generated via proteolysis of endocytosed antigens. MHCII dimers are dissociated from CD74/Ii by the combined action of proteolysis and HLA-DM. Lysosomal enzymes such as cathepsin, degrade CD74/Ii leaving a 24 amino acid remnant called class II-associated Ii or CLIP. Interacts (via the peptide binding cleft) with CLIP; this interaction inhibits antigen peptide binding before entry in the endosomal compartment. The displacement of CLIP and replacement by a high affinity peptide in lysosomes is performed by HLA-DM heterodimer. HLA-DM catalyzes CLIP dissociation from MHCII, stabilizes empty MHCII and mediates the selection of high affinity peptides. Interacts with HLA-DM heterodimer; this interaction is direct. Interacts with TCR (via CDR3). Interacts (via beta-2 domain) with CD4 coreceptor (via Ig-like V-type domain); this interaction is of exceptionally low affinity yet necessary for optimal recognition of antigenic peptides. (Microbial infection) Interacts with Staphylococcus aureus enterotoxin A/entA, enterotoxin B/entB, enterotoxin C1/entC1, enterotoxin D/entD and enterotoxin H/entH. Enterotoxins bind outside the peptide-binding cleft of MHCII: enterotoxin H/entH interacts via the beta-1 domain of MHCII and in a zinc-dependent way, whereas enterotoxin B/entB interacts primarily via the alpha-1 domain. In terms of assembly, (Microbial infection) Interacts with Epstein-Barr virus gp42 protein. Post-translationally, ubiquitinated by MARCHF1 and MARCHF8 at Lys-254 leading to sorting into the endosome system and down-regulation of MHCII. As to expression, expressed in professional APCs: monocyte/macrophages, dendritic cells and B cells (at protein level). Expressed in thymic epithelial cells (at protein level).

It localises to the cell membrane. It is found in the endoplasmic reticulum membrane. Its subcellular location is the lysosome membrane. The protein resides in the late endosome membrane. The protein localises to the autolysosome membrane. Functionally, a beta chain of antigen-presenting major histocompatibility complex class II (MHCII) molecule. In complex with the alpha chain HLA-DRA, displays antigenic peptides on professional antigen presenting cells (APCs) for recognition by alpha-beta T cell receptor (TCR) on HLA-DRB1-restricted CD4-positive T cells. This guides antigen-specific T-helper effector functions, both antibody-mediated immune response and macrophage activation, to ultimately eliminate the infectious agents and transformed cells. Typically presents extracellular peptide antigens of 10 to 30 amino acids that arise from proteolysis of endocytosed antigens in lysosomes. In the tumor microenvironment, presents antigenic peptides that are primarily generated in tumor-resident APCs likely via phagocytosis of apoptotic tumor cells or macropinocytosis of secreted tumor proteins. Presents peptides derived from intracellular proteins that are trapped in autolysosomes after macroautophagy, a mechanism especially relevant for T cell selection in the thymus and central immune tolerance. The selection of the immunodominant epitopes follows two processing modes: 'bind first, cut/trim later' for pathogen-derived antigenic peptides and 'cut first, bind later' for autoantigens/self-peptides. The anchor residue at position 1 of the peptide N-terminus, usually a large hydrophobic residue, is essential for high affinity interaction with MHCII molecules. In terms of biological role, allele DRB1*01:01: Displays an immunodominant epitope derived from Bacillus anthracis pagA/protective antigen, PA (KLPLYISNPNYKVNVYAVT), to both naive and PA-specific memory CD4-positive T cells. Presents immunodominant HIV-1 gag peptide (FRDYVDRFYKTLRAEQASQE) on infected dendritic cells for recognition by TRAV24-TRBV2 TCR on CD4-positive T cells and controls viral load. May present to T-helper 1 cells several HRV-16 epitopes derived from capsid proteins VP1 (PRFSLPFLSIASAYYMFYDG) and VP2 (PHQFINLRSNNSATLIVPYV), contributing to viral clearance. Displays commonly recognized peptides derived from IAV external protein HA (PKYVKQNTLKLAT and SNGNFIAPEYAYKIVK) and from internal proteins M, NP and PB1, with M-derived epitope (GLIYNRMGAVTTEV) being the most immunogenic. Presents a self-peptide derived from COL4A3 (GWISLWKGFSF) to TCR (TRAV14 biased) on CD4-positive, FOXP3-positive regulatory T cells and mediates immune tolerance to self. May present peptides derived from oncofetal trophoblast glycoprotein TPBG 5T4, known to be recognized by both T-helper 1 and regulatory T cells. Displays with low affinity a self-peptide derived from MBP (VHFFKNIVTPRTP). Allele DRB1*03:01: May present to T-helper 1 cells an HRV-16 epitope derived from capsid protein VP2 (NEKQPSDDNWLNFDGTLLGN), contributing to viral clearance. Displays self-peptides derived from retinal SAG (NRERRGIALDGKIKHE) and thyroid TG (LSSVVVDPSIRHFDV). Presents viral epitopes derived from HHV-6B gH/U48 and U85 antigens to polyfunctional CD4-positive T cells with cytotoxic activity implicated in control of HHV-6B infection. Presents several immunogenic epitopes derived from C.tetani neurotoxin tetX, playing a role in immune recognition and long-term protection. Its function is as follows. Allele DRB1*04:01: Presents an immunodominant bacterial epitope derived from M.tuberculosis esxB/culture filtrate antigen CFP-10 (EISTNIRQAGVQYSR), eliciting CD4-positive T cell effector functions such as IFNG production and cytotoxic activity. May present to T-helper 1 cells an HRV-16 epitope derived from capsid protein VP2 (NEKQPSDDNWLNFDGTLLGN), contributing to viral clearance. Presents tumor epitopes derived from melanoma-associated TYR antigen (QNILLSNAPLGPQFP and DYSYLQDSDPDSFQD), triggering CD4-positive T cell effector functions such as GMCSF production. Displays preferentially citrullinated self-peptides derived from VIM (GVYATR/citSSAVR and SAVRAR/citSSVPGVR) and ACAN (VVLLVATEGR/ CitVRVNSAYQDK). Displays self-peptides derived from COL2A1. Functionally, allele DRB1*04:02: Displays native or citrullinated self-peptides derived from VIM. In terms of biological role, allele DRB1*04:04: May present to T-helper 1 cells several HRV-16 epitopes derived from capsid proteins VP1 (HIVMQYMYVPPGAPIPTTRN) and VP2 (RGDSTITSQDVANAVVGYGV), contributing to viral clearance. Displays preferentially citrullinated self-peptides derived from VIM (SAVRAR/citSSVPGVR). Allele DRB1*04:05: May present to T-helper 1 cells an immunogenic epitope derived from tumor-associated antigen WT1 (KRYFKLSHLQMHSRKH), likely providing for effective antitumor immunity in a wide range of solid and hematological malignancies. Its function is as follows. Allele DRB1*05:01: Presents an immunodominant HIV-1 gag peptide (FRDYVDRFYKTLRAEQASQE) on infected dendritic cells for recognition by TRAV24-TRBV2 TCR on CD4-positive T cells and controls viral load. Functionally, allele DRB1*07:01: Upon EBV infection, presents latent antigen EBNA2 peptide (PRSPTVFYNIPPMPLPPSQL) to CD4-positive T cells, driving oligoclonal expansion and selection of a dominant virus-specific memory T cell subset with cytotoxic potential to directly eliminate virus-infected B cells. May present to T-helper 1 cells several HRV-16 epitopes derived from capsid proteins VP1 (PRFSLPFLSIASAYYMFYDG) and VP2 (VPYVNAVPMDSMVRHNNWSL), contributing to viral clearance. In the context of tumor immunesurveillance, may present to T-helper 1 cells an immunogenic epitope derived from tumor-associated antigen WT1 (MTEYKLVVVGAVGVGKSALTIQLI), likely providing for effective antitumor immunity in a wide range of solid and hematological malignancies. In metastatic epithelial tumors, presents to intratumoral CD4-positive T cells a KRAS neoantigen (MTEYKLVVVGAVGVGKSALTIQLI) carrying G12V hotspot driver mutation and may mediate tumor regression. In terms of biological role, allele DRB1*11:01: Displays an immunodominant HIV-1 gag peptide (FRDYVDRFYKTLRAEQASQE) on infected dendritic cells for recognition by TRAV24-TRBV2 TCR on CD4-positive T cells and controls viral load. May present to T-helper 1 cells an HRV-16 epitope derived from capsid protein VP2 (SDRIIQITRGDSTITSQDVA), contributing to viral clearance. Presents several immunogenic epitopes derived from C.tetani neurotoxin tetX, playing a role in immune recognition and longterm protection. In the context of tumor immunesurveillance, may present tumor-derived neoantigens to CD4-positive T cells and trigger anti-tumor helper functions. Allele DRB1*13:01: Presents viral epitopes derived from HHV-6B antigens to polyfunctional CD4-positive T cells implicated in control of HHV-6B infection. Its function is as follows. Allele DRB1*15:01: May present to T-helper 1 cells an HRV-16 epitope derived from capsid protein VP2 (SNNSATLIVPYVNAVPMDSM), contributing to viral clearance. Displays a self-peptide derived from MBP (ENPVVHFFKNIVTPR). May present to T-helper 1 cells an immunogenic epitope derived from tumor-associated antigen WT1 (KRYFKLSHLQMHSRKH), likely providing for effective antitumor immunity in a wide range of solid and hematological malignancies. Functionally, allele DRB1*15:02: Displays an immunodominant HIV-1 gag peptide (FRDYVDRFYKTLRAEQASQE) on infected dendritic cells for recognition by TRAV24-TRBV2 TCR on CD4-positive T cells and controls viral load. May present to T-helper 1 cells an immunogenic epitope derived from tumor-associated antigen WT1 (KRYFKLSHLQMHSRKH), likely providing for effective antitumor immunity in a wide range of solid and hematological malignancies. In terms of biological role, (Microbial infection) Acts as a receptor for Epstein-Barr virus on lymphocytes. This chain is HLA class II histocompatibility antigen, DRB1 beta chain, found in Homo sapiens (Human).